Here is a 748-residue protein sequence, read N- to C-terminus: Chondroadherin-like protein (748 aa).

Positions 1–29 are cleaved as a signal peptide; the sequence is MERPQSSIWVFMLLLFMVLLQSPAWHVAA. The LRRNT 1 domain occupies 30–61; sequence QRCPQTCVCDNSRRHVTCRHQNLTEVPNTIPE. An N-linked (GlcNAc...) asparagine glycan is attached at N51. 9 LRR repeats span residues 85–107, 108–131, 132–155, 156–179, 181–203, 204–227, 229–252, 253–275, and 276–299; these read PHLT…AFRG, LGRL…ALDG, LGSL…TFGA, LGSL…AFQG, LRTR…ALAG, LPAL…ALSQ, RSLA…GLAL, PGLR…AFAH, and CPRL…QVPG. In terms of domain architecture, LRRCT 1 spans 309-357; that stretch reads NPLWCACHARPLLEWLVRARVRSDGACRGPRRLRGEALDTLRPSDLRCP. The tract at residues 352 to 389 is disordered; that stretch reads SDLRCPGDAAAGDGDGDEDEDRPAGPRAPPLRSPHGEA. Positions 394-428 constitute an LRRNT 2 domain; that stretch reads PCPPACACVAETRHSTCDGRGLQAVPRGFPNDTQL. A disulfide bridge connects residues C395 and C410. LRR repeat units lie at residues 423–446, 448–470, 471–494, 496–518, 519–542, 544–566, 567–590, 591–614, 616–639, and 641–665; these read PNDT…AFPG, RHLV…ALAG, LDRL…ALEG, PNLG…ALRA, LPTL…DLAG, RALR…ALGP, AREL…ALEG, LPAL…AFQP, GRSL…AFSG, and GKGL…GLSG. N625 carries an N-linked (GlcNAc...) asparagine glycan. The 49-residue stretch at 674–722 folds into the LRRCT 2 domain; it reads NPFHCDCQLLPLHRWLTGLNLRVGATCATPPSVRGQKVKVAAPVFEACP. Disulfide bonds link C678-C721 and C680-C700. The tract at residues 728-748 is disordered; it reads KAKRTPTSRGSARRTPSLSRH. Over residues 734 to 748 the composition is skewed to polar residues; the sequence is TSRGSARRTPSLSRH.

This sequence belongs to the small leucine-rich proteoglycan (SLRP) family. SLRP class IV subfamily. Associates with collagen and binds to collagen fibrils. As to expression, expressed in cartilage, including articular knee cartilage, where it localizes to the extracellular space in the area immediately surrounding the chondrocytes, not detected in any other tissues (at protein level).

Its subcellular location is the secreted. It localises to the extracellular space. The protein resides in the extracellular matrix. Potential negative modulator of chondrocyte differentiation. Inhibits collagen fibrillogenesis in vitro. May influence chondrocyte's differentiation by acting on its cellular collagenous microenvironment. This chain is Chondroadherin-like protein (Chadl), found in Mus musculus (Mouse).